We begin with the raw amino-acid sequence, 277 residues long: Hydroxyethylthiazole kinase (277 aa).

Substrate is bound at residue methionine 55. The ATP site is built by arginine 130 and serine 176. Glycine 203 is a binding site for substrate.

Belongs to the Thz kinase family. The cofactor is Mg(2+).

The catalysed reaction is 5-(2-hydroxyethyl)-4-methylthiazole + ATP = 4-methyl-5-(2-phosphooxyethyl)-thiazole + ADP + H(+). The protein operates within cofactor biosynthesis; thiamine diphosphate biosynthesis; 4-methyl-5-(2-phosphoethyl)-thiazole from 5-(2-hydroxyethyl)-4-methylthiazole: step 1/1. Catalyzes the phosphorylation of the hydroxyl group of 4-methyl-5-beta-hydroxyethylthiazole (THZ). The polypeptide is Hydroxyethylthiazole kinase (Cutibacterium acnes (strain DSM 16379 / KPA171202) (Propionibacterium acnes)).